A 188-amino-acid chain; its full sequence is GTPase KRas (188 aa).

GTP contacts are provided by residues Gly10–Ala18, Val29–Thr35, Ala59–Gly60, and Asn116–Asp119. Residues Tyr32–Tyr40 carry the Effector region motif. Residues Lys167–Met188 form a disordered region. At Cys185 the chain carries Cysteine methyl ester. Cys185 carries the S-farnesyl cysteine lipid modification. Residues Val186–Met188 constitute a propeptide, removed in mature form.

It belongs to the small GTPase superfamily. Ras family.

It localises to the cell membrane. The protein localises to the cytoplasm. It catalyses the reaction GTP + H2O = GDP + phosphate + H(+). With respect to regulation, alternates between an inactive form bound to GDP and an active form bound to GTP. Activated by a guanine nucleotide-exchange factor (GEF) and inactivated by a GTPase-activating protein (GAP). In terms of biological role, ras proteins bind GDP/GTP and possess intrinsic GTPase activity. Plays an important role in the regulation of cell proliferation. May play a role in promoting oncogenic events by inducing transcriptional silencing of tumor suppressor genes (TSGs). The protein is GTPase KRas (kras) of Cyprinus carpio (Common carp).